A 164-amino-acid polypeptide reads, in one-letter code: MSVVTGGGEAAGGTSGGGARVFFQSPRGGTGGSRESSSHSGSSREDSAPVATVAAAGQVQQQQRRHQQGKVTVKYDRKELRKRLVLEEWIVEQLGQLYGCEEEEMPDVEIDIDDLLDADSEEERASKLQEALVDCYKPTEEFIRELLSRIRGMRKLSPPQKKSV.

Over residues 1-19 (MSVVTGGGEAAGGTSGGGA) the composition is skewed to gly residues. A disordered region spans residues 1–72 (MSVVTGGGEA…QRRHQQGKVT (72 aa)). N-acetylserine is present on S2. The residue at position 25 (S25) is a Phosphoserine. The residue at position 27 (R27) is an Omega-N-methylarginine. Residue S33 is modified to Phosphoserine. The segment covering 50–62 (VATVAAAGQVQQQ) has biased composition (low complexity). The residue at position 72 (T72) is a Phosphothreonine; by ILK1.

The protein belongs to the PP1 inhibitor family. In terms of processing, has over 600-fold higher inhibitory activity when phosphorylated, creating a molecular switch for regulating the phosphorylation status of PPP1CA substrates and smooth muscle contraction. The main inhibitory site appears to be Thr-72.

Its subcellular location is the endomembrane system. In terms of biological role, inhibitor of the PP1 regulatory subunit PPP1CA. In Rattus norvegicus (Rat), this protein is Protein phosphatase 1 regulatory subunit 14C (Ppp1r14c).